The sequence spans 291 residues: tRNA dimethylallyltransferase (291 aa).

5–12 (GPTAGGKS) lines the ATP pocket. 7–12 (TAGGKS) provides a ligand contact to substrate. Positions 30-33 (DSMQ) are interaction with substrate tRNA.

The protein belongs to the IPP transferase family. Monomer. It depends on Mg(2+) as a cofactor.

It carries out the reaction adenosine(37) in tRNA + dimethylallyl diphosphate = N(6)-dimethylallyladenosine(37) in tRNA + diphosphate. Functionally, catalyzes the transfer of a dimethylallyl group onto the adenine at position 37 in tRNAs that read codons beginning with uridine, leading to the formation of N6-(dimethylallyl)adenosine (i(6)A). The protein is tRNA dimethylallyltransferase of Frankia casuarinae (strain DSM 45818 / CECT 9043 / HFP020203 / CcI3).